A 372-amino-acid chain; its full sequence is Dof zinc finger protein DOF5.6 (372 aa).

A Dof-type zinc finger spans residues 73–127; sequence QKCPRCESTHTKFCYYNNYSLSQPRYFCKTCRRYWTKGGTLRNIPVGGGCRKNKK. Positions 75, 78, 100, and 103 each coordinate Zn(2+). The tract at residues 117–146 is disordered; it reads PVGGGCRKNKKPSSSNSSSSTSSGKKPSNI. Positions 128–145 are enriched in low complexity; it reads PSSSNSSSSTSSGKKPSN.

In terms of tissue distribution, the PEAR proteins (e.g. DOF2.4, DOF5.1, DOF3.2, DOF1.1, DOF5.6 and DOF5.3) form a short-range concentration gradient that peaks at protophloem sieve elements (PSE). Preferentially expressed in the vasculature of all organs, including seedlings, roots, stems, buds, leaves, flowers and siliques, and particularly in the cambium, phloem and interfascicular parenchyma cells of inflorescence stems.

The protein resides in the nucleus. Functionally, transcription factor that binds specifically to a 5'-AA[AG]G-3' consensus core sequence. Promotes expression. The PEAR proteins (e.g. DOF2.4, DOF5.1, DOF3.2, DOF1.1, DOF5.6 and DOF5.3) activate gene expression that promotes radial growth of protophloem sieve elements. Involved in the regulation of interfascicular cambium formation and vascular tissue development, particularly at a very early stage during inflorescence stem development; promotes both cambium activity and phloem specification, but prevents xylem specification. This is Dof zinc finger protein DOF5.6 from Arabidopsis thaliana (Mouse-ear cress).